Consider the following 310-residue polypeptide: Pantothenate kinase (310 aa).

Position 95-102 (95-102 (GSVAVGKS)) interacts with ATP.

The protein belongs to the prokaryotic pantothenate kinase family.

The protein localises to the cytoplasm. It catalyses the reaction (R)-pantothenate + ATP = (R)-4'-phosphopantothenate + ADP + H(+). It participates in cofactor biosynthesis; coenzyme A biosynthesis; CoA from (R)-pantothenate: step 1/5. This is Pantothenate kinase from Rhodococcus jostii (strain RHA1).